Consider the following 474-residue polypeptide: MKILYCAAEADPFIKTGGLADVAGTLPLEMKKQGHDVKVVIPLYKLIDEEYKKKFEFEGSFYVDLDFKHHYVGVFKYIHRGVEFYFLDNEDYFNRDNVYGEYDDCERFVFFSKACVQLLRYIDFDCDIIHSNDWHTAMVNVYARDFAKGDPFYESIKTVFTIHNLKYQGVFSSNSLRQTDLSPMYFTEDALKFYDAINFMKGAIVFSDRVTTVSKTYADEIKYSFFGEGLDGVIRQYHYKISGITNGIDTTIWNPETDKYLFKNYSLKNIKDKDENKKALQRMYGLEEKNVPVFAMVTRLVENKGLELVRYIMDEFLTTEDVQVVILGTGDYSYEEMFKYYEWKFPDKLKANIYYNNEESHKIYAGADFLMMPSIFEPCGISQLIAMRYGTIPVVRETGGLRDTVQSFNEFSKEGNGFSFTNINAHDFLYTLRRAISFYYNDDFNIIKENAMNSKNDWEKSAKEYIELYEEIIK.

Lys15 contacts ADP-alpha-D-glucose.

Belongs to the glycosyltransferase 1 family. Bacterial/plant glycogen synthase subfamily.

The enzyme catalyses [(1-&gt;4)-alpha-D-glucosyl](n) + ADP-alpha-D-glucose = [(1-&gt;4)-alpha-D-glucosyl](n+1) + ADP + H(+). It participates in glycan biosynthesis; glycogen biosynthesis. Functionally, synthesizes alpha-1,4-glucan chains using ADP-glucose. This chain is Glycogen synthase, found in Finegoldia magna (strain ATCC 29328 / DSM 20472 / WAL 2508) (Peptostreptococcus magnus).